A 370-amino-acid chain; its full sequence is Ferrochelatase (370 aa).

Residues H210 and E291 each coordinate Fe cation.

This sequence belongs to the ferrochelatase family.

The protein resides in the cytoplasm. It carries out the reaction heme b + 2 H(+) = protoporphyrin IX + Fe(2+). It functions in the pathway porphyrin-containing compound metabolism; protoheme biosynthesis; protoheme from protoporphyrin-IX: step 1/1. In terms of biological role, catalyzes the ferrous insertion into protoporphyrin IX. This Marinobacter nauticus (strain ATCC 700491 / DSM 11845 / VT8) (Marinobacter aquaeolei) protein is Ferrochelatase.